The primary structure comprises 483 residues: Regulatory protein ViaA (483 aa).

It belongs to the ViaA family. As to quaternary structure, homodimer. Interacts with RavA.

The protein resides in the cytoplasm. Component of the RavA-ViaA chaperone complex, which may act on the membrane to optimize the function of some of the respiratory chains. ViaA stimulates the ATPase activity of RavA. The polypeptide is Regulatory protein ViaA (Escherichia coli O139:H28 (strain E24377A / ETEC)).